A 308-amino-acid polypeptide reads, in one-letter code: tRNA pseudouridine synthase B (308 aa).

Aspartate 47 acts as the Nucleophile in catalysis.

It belongs to the pseudouridine synthase TruB family. Type 1 subfamily.

The catalysed reaction is uridine(55) in tRNA = pseudouridine(55) in tRNA. Responsible for synthesis of pseudouridine from uracil-55 in the psi GC loop of transfer RNAs. This Rhodospirillum rubrum (strain ATCC 11170 / ATH 1.1.1 / DSM 467 / LMG 4362 / NCIMB 8255 / S1) protein is tRNA pseudouridine synthase B.